The primary structure comprises 280 residues: MIGIIGGTGIYEMAEYGRLERRGSLITPYGKTPEISVFKLHGRRVAFIPRHSPGHDKPPHMVNYRANIWALKELGVRQIIATNAVGSLKRSIGPGDFVVPHDFLDFTRSRPSTFYDEKTVHVDMTEPYCRNIRSALSGSSGVVDGGVYVCTEGPRFETPAEIRMFQTLGGTVVGMTGLPEAVLARELEMCYASICLVSNYAASISPSKLTIDEVFEIMDEKKNDLIDIIDAAIRDLKTEQSCPCQHALRGADVNNHEEELYEGFNDICKPEKEEQHHDGP.

Phosphate-binding positions include Thr-8 and 50–51 (RH). Met-175 lines the substrate pocket. Thr-176 contacts phosphate. 199 to 201 (NYA) is a substrate binding site.

The protein belongs to the PNP/MTAP phosphorylase family. MTAP subfamily. Homotrimer.

It catalyses the reaction S-methyl-5'-thioinosine + phosphate = 5-(methylsulfanyl)-alpha-D-ribose 1-phosphate + hypoxanthine. It functions in the pathway purine metabolism; purine nucleoside salvage. Catalyzes the reversible phosphorylation of S-methyl-5'-thioinosine (MTI) to hypoxanthine and 5-methylthioribose-1-phosphate. Involved in the breakdown of S-methyl-5'-thioadenosine (MTA), a major by-product of polyamine biosynthesis. Catabolism of (MTA) occurs via deamination to MTI and phosphorolysis to hypoxanthine. This Methanothermobacter thermautotrophicus (strain ATCC 29096 / DSM 1053 / JCM 10044 / NBRC 100330 / Delta H) (Methanobacterium thermoautotrophicum) protein is Probable S-methyl-5'-thioinosine phosphorylase.